Reading from the N-terminus, the 529-residue chain is Pheophorbide a oxygenase, chloroplastic (529 aa).

2 disordered regions span residues 1-24 and 46-72; these read MPVM…RRVP and LRVA…TSSA. Residues 1-47 constitute a chloroplast transit peptide; sequence MPVMAPTASLLLSPRPLPASRRVPSLPALSASGRLRLRRARADTRLR. The region spanning 82–194 is the Rieske domain; sequence WYPVSLVEDL…TLVSQGLLFV (113 aa). Residues cysteine 124, histidine 126, cysteine 144, and histidine 147 each contribute to the [2Fe-2S] cluster site.

Requires [2Fe-2S] cluster as cofactor. As to expression, expressed in leaves. Expressed at low levels in roots, stems, panicles and seeds.

Its subcellular location is the plastid. It is found in the chloroplast. The enzyme catalyses pheophorbide a + 2 reduced [2Fe-2S]-[ferredoxin] + O2 + 2 H(+) = red chlorophyll catabolite + 2 oxidized [2Fe-2S]-[ferredoxin]. It functions in the pathway porphyrin-containing compound metabolism; chlorophyll degradation. Functionally, catalyzes the key reaction of chlorophyll catabolism, porphyrin macrocycle cleavage of pheophorbide a (pheide a) to a primary fluorescent catabolite (pFCC). Works in a two-step reaction with red chlorophyll catabolite reductase (RCCR). Creates the intermediate RCC through the opening of the porphyrin macrocycle by the introduction of one atom of molecular oxygen at the alpha-methine bridge. Seems to be specific for pheide a. Belongs to the chlorophyll catabolic enzymes (CCEs). May play a role in senescence and response to wounding. The polypeptide is Pheophorbide a oxygenase, chloroplastic (Oryza sativa subsp. japonica (Rice)).